The chain runs to 184 residues: ATP synthase subunit b, chloroplastic (184 aa).

The helical transmembrane segment at 27–49 threads the bilayer; the sequence is LATNPINLSVVLGVLIFFGKGVL.

The protein belongs to the ATPase B chain family. In terms of assembly, F-type ATPases have 2 components, F(1) - the catalytic core - and F(0) - the membrane proton channel. F(1) has five subunits: alpha(3), beta(3), gamma(1), delta(1), epsilon(1). F(0) has four main subunits: a(1), b(1), b'(1) and c(10-14). The alpha and beta chains form an alternating ring which encloses part of the gamma chain. F(1) is attached to F(0) by a central stalk formed by the gamma and epsilon chains, while a peripheral stalk is formed by the delta, b and b' chains.

It localises to the plastid. The protein localises to the chloroplast thylakoid membrane. Its function is as follows. F(1)F(0) ATP synthase produces ATP from ADP in the presence of a proton or sodium gradient. F-type ATPases consist of two structural domains, F(1) containing the extramembraneous catalytic core and F(0) containing the membrane proton channel, linked together by a central stalk and a peripheral stalk. During catalysis, ATP synthesis in the catalytic domain of F(1) is coupled via a rotary mechanism of the central stalk subunits to proton translocation. Functionally, component of the F(0) channel, it forms part of the peripheral stalk, linking F(1) to F(0). The protein is ATP synthase subunit b, chloroplastic of Lepidium virginicum (Virginia pepperweed).